We begin with the raw amino-acid sequence, 355 residues long: WAT1-related protein At1g25270 (355 aa).

The next 10 membrane-spanning stretches (helical) occupy residues 4 to 24, 33 to 53, 65 to 85, 94 to 114, 134 to 154, 175 to 195, 207 to 227, 244 to 264, 272 to 292, and 297 to 317; these read VVAM…FKIT, VLVA…ALIF, LLLL…ILYL, TFSA…GLVF, LLGA…IHIW, VSIL…LWLL, LYWN…IIAL, LLAT…LVAW, LFVT…GSFA, and LHLG…LVVW. Positions 12–142 constitute an EamA 1 domain; sequence FIFAGMFILF…TLLGACGALV (131 aa). The region spanning 210–316 is the EamA 2 domain; that stretch reads NTSLMNGVGS…IMVGGVYLVV (107 aa).

This sequence belongs to the drug/metabolite transporter (DMT) superfamily. Plant drug/metabolite exporter (P-DME) (TC 2.A.7.4) family.

The protein resides in the membrane. The polypeptide is WAT1-related protein At1g25270 (Arabidopsis thaliana (Mouse-ear cress)).